Reading from the N-terminus, the 543-residue chain is Protein B602L (543 aa).

13 tandem repeats follow at residues 161–164 (CAST), 165–168 (CAST), 169–172 (CAST), 173–176 (CAST), 177–180 (CADT), 181–184 (NVDT), 185–188 (CTDT), 189–192 (CAST), 193–196 (CADT), 197–200 (NVDT), 201–204 (CAST), 205–208 (CADT), and 209–212 (CAST). Positions 161-212 (CASTCASTCASTCASTCADTNVDTCTDTCASTCADTNVDTCASTCADTCAST) are 13 X 4 AA tandem repeats of [CN]-[ATV]-[DS]-T.

The protein belongs to the asfivirus B602L family.

The protein resides in the host cytoplasm. Functionally, plays an essential role in the assembly of the icosahedral capsid of the virus. Allows the assembly of 3 molecules of hexon protein p72 and formation of a thermostable trimer. This is Protein B602L from African swine fever virus (isolate Pig/Kenya/KEN-50/1950) (ASFV).